The chain runs to 399 residues: Acetylornithine aminotransferase (399 aa).

Pyridoxal 5'-phosphate is bound by residues 99–100 (GA) and Phe132. A N(2)-acetyl-L-ornithine-binding site is contributed by Arg135. 217 to 220 (DEVQ) contacts pyridoxal 5'-phosphate. Position 246 is an N6-(pyridoxal phosphate)lysine (Lys246). N(2)-acetyl-L-ornithine is bound at residue Thr274. Residue Thr275 participates in pyridoxal 5'-phosphate binding.

This sequence belongs to the class-III pyridoxal-phosphate-dependent aminotransferase family. ArgD subfamily. As to quaternary structure, homodimer. The cofactor is pyridoxal 5'-phosphate.

The protein resides in the cytoplasm. The enzyme catalyses N(2)-acetyl-L-ornithine + 2-oxoglutarate = N-acetyl-L-glutamate 5-semialdehyde + L-glutamate. It participates in amino-acid biosynthesis; L-arginine biosynthesis; N(2)-acetyl-L-ornithine from L-glutamate: step 4/4. The polypeptide is Acetylornithine aminotransferase (Agrobacterium fabrum (strain C58 / ATCC 33970) (Agrobacterium tumefaciens (strain C58))).